Reading from the N-terminus, the 366-residue chain is Pectinesterase A (366 aa).

Residues 1–24 form the signal peptide; sequence MLKTISGTLALSLIIAASVHQAQA. 2 residues coordinate substrate: Thr109 and Gln153. The Proton donor role is filled by Asp178. The cysteines at positions 192 and 212 are disulfide-linked. The active-site Nucleophile is the Asp199. Substrate is bound by residues Arg219, Asn226, Tyr230, Arg267, Trp269, and Thr272.

It belongs to the pectinesterase family. In terms of assembly, monomer.

The protein resides in the secreted. The enzyme catalyses [(1-&gt;4)-alpha-D-galacturonosyl methyl ester](n) + n H2O = [(1-&gt;4)-alpha-D-galacturonosyl](n) + n methanol + n H(+). Its pathway is glycan metabolism; pectin degradation; 2-dehydro-3-deoxy-D-gluconate from pectin: step 1/5. Its function is as follows. Involved in maceration and soft-rotting of plant tissue. This Dickeya chrysanthemi (Pectobacterium chrysanthemi) protein is Pectinesterase A (pemA).